The following is a 505-amino-acid chain: Maturase K (505 aa).

This sequence belongs to the intron maturase 2 family. MatK subfamily.

The protein resides in the plastid. It localises to the chloroplast. Usually encoded in the trnK tRNA gene intron. Probably assists in splicing its own and other chloroplast group II introns. The sequence is that of Maturase K from Rosa stellata (Star rose).